Reading from the N-terminus, the 457-residue chain is Protein translocase subunit SecY (457 aa).

Transmembrane regions (helical) follow at residues 17–37 (IFFTFSLLALCRIGVFIPVPG), 75–95 (IALGVVPYISASIIVQLLVVF), 120–140 (LFTLLLACVQSLLFAKFALRM), 163–183 (VFYLTTVVVMTTGTLLLMWIG), 195–215 (ISLIITLGMLASFPSVLGSIF), 230–250 (IVSLLVLCAVFVFVLMATVLI), 287–307 (VIPVIFASSLLMFPATIGQFL), 326–346 (VVYSIFYVLLIIFFTYFWTAT), 386–406 (LLGAVFLAVVAILPSILGRIL), and 412–432 (VSYFLGGTAMLIVVGVVLDTM).

This sequence belongs to the SecY/SEC61-alpha family. As to quaternary structure, component of the Sec protein translocase complex. Heterotrimer consisting of SecY, SecE and SecG subunits. The heterotrimers can form oligomers, although 1 heterotrimer is thought to be able to translocate proteins. Interacts with the ribosome. Interacts with SecDF, and other proteins may be involved. Interacts with SecA.

It is found in the cell inner membrane. Its function is as follows. The central subunit of the protein translocation channel SecYEG. Consists of two halves formed by TMs 1-5 and 6-10. These two domains form a lateral gate at the front which open onto the bilayer between TMs 2 and 7, and are clamped together by SecE at the back. The channel is closed by both a pore ring composed of hydrophobic SecY resides and a short helix (helix 2A) on the extracellular side of the membrane which forms a plug. The plug probably moves laterally to allow the channel to open. The ring and the pore may move independently. The protein is Protein translocase subunit SecY of Chlamydia muridarum (strain MoPn / Nigg).